The primary structure comprises 334 residues: S-adenosylmethionine:tRNA ribosyltransferase-isomerase (334 aa).

It belongs to the QueA family. In terms of assembly, monomer.

It is found in the cytoplasm. It catalyses the reaction 7-aminomethyl-7-carbaguanosine(34) in tRNA + S-adenosyl-L-methionine = epoxyqueuosine(34) in tRNA + adenine + L-methionine + 2 H(+). The protein operates within tRNA modification; tRNA-queuosine biosynthesis. Transfers and isomerizes the ribose moiety from AdoMet to the 7-aminomethyl group of 7-deazaguanine (preQ1-tRNA) to give epoxyqueuosine (oQ-tRNA). The sequence is that of S-adenosylmethionine:tRNA ribosyltransferase-isomerase from Rubrobacter xylanophilus (strain DSM 9941 / JCM 11954 / NBRC 16129 / PRD-1).